The following is a 149-amino-acid chain: Epoxide hydrolase EphG (149 aa).

The active-site Proton donor is D93. The Proton acceptor role is filled by D122.

The protein belongs to the limonene-1,2-epoxide hydrolase family. Homodimer. Is also present as monomer in solution.

The catalysed reaction is an epoxide + H2O = an ethanediol. The enzyme catalyses 5,6alpha-epoxy-5alpha-cholestan-3beta-ol + H2O = 5alpha-cholestane-3beta,5,6beta-triol. It carries out the reaction 5,6beta-epoxy-5beta-cholestan-3beta-ol + H2O = 5alpha-cholestane-3beta,5,6beta-triol. Is inhibited by the anti-epileptic drug valpromide (Ki value of about 100 uM). In terms of biological role, epoxide hydrolase capable of hydrolyzing long or bulky lipophilic epoxides such as 9,10-epoxystearic acid and cholesterol 5,6-oxide in vitro. The physiological substrates have yet to be identified, but could be fatty acid or steroid derivatives. The chain is Epoxide hydrolase EphG (ephG) from Mycobacterium tuberculosis (strain ATCC 25618 / H37Rv).